A 413-amino-acid polypeptide reads, in one-letter code: Snake venom metalloproteinase AaPA (413 aa).

The first 20 residues, 1–20 (MIQVLLVTICLAAFPYQGSS), serve as a signal peptide directing secretion. A propeptide spanning residues 21-189 (IILESGKVND…KKASQLIVST (169 aa)) is cleaved from the precursor. In terms of domain architecture, Peptidase M12B spans 193–390 (RYMEIVIVVD…ENPPCILNKP (198 aa)). Residues glutamate 196 and aspartate 280 each contribute to the Ca(2+) site. Cystine bridges form between cysteine 304-cysteine 385, cysteine 344-cysteine 369, and cysteine 346-cysteine 352. A Zn(2+)-binding site is contributed by histidine 329. Residue glutamate 330 is part of the active site. Residues histidine 333 and histidine 339 each contribute to the Zn(2+) site. Positions 385, 388, 400, 403, 405, 407, and 413 each coordinate Ca(2+). The propeptide occupies 391–413 (LRTDTVSTPVSGNELLEAEKDYD).

The protein belongs to the venom metalloproteinase (M12B) family. P-I subfamily. Monomer. Zn(2+) is required as a cofactor. In terms of tissue distribution, expressed by the venom gland.

The protein resides in the secreted. Snake venom zinc metalloprotease that may activate prothrombin. The protein is Snake venom metalloproteinase AaPA of Deinagkistrodon acutus (Hundred-pace snake).